The chain runs to 139 residues: 3-hydroxyacyl-[acyl-carrier-protein] dehydratase FabZ (139 aa).

Histidine 46 is a catalytic residue.

The protein belongs to the thioester dehydratase family. FabZ subfamily.

Its subcellular location is the cytoplasm. The enzyme catalyses a (3R)-hydroxyacyl-[ACP] = a (2E)-enoyl-[ACP] + H2O. In terms of biological role, involved in unsaturated fatty acids biosynthesis. Catalyzes the dehydration of short chain beta-hydroxyacyl-ACPs and long chain saturated and unsaturated beta-hydroxyacyl-ACPs. The chain is 3-hydroxyacyl-[acyl-carrier-protein] dehydratase FabZ from Petrotoga mobilis (strain DSM 10674 / SJ95).